The sequence spans 344 residues: L-rhamnose-proton symporter (344 aa).

A run of 10 helical transmembrane segments spans residues 4-24, 38-58, 68-88, 101-121, 131-151, 175-195, 214-234, 259-279, 290-310, and 323-343; these read AITMGIFWHLIGAASAACFYA, WSVGGIVSWLILPWAISATLL, FSASTLLPVFLFGAMWGIGNI, MGIGIAIGITLIVGTLMTPII, TQGGQMTLLGVLVAVIGVGIV, LLLAVMCGIFSAGMSFAMNAA, LPSYVVIMGGGALVNLGFCFI, LLLSALGGLMWYLQFFFYAWG, MSWMLHMSFYVLCGGVVGLVL, and VLSLGCVVIIIAANIVGLGMA.

The protein belongs to the L-rhamnose transporter (TC 2.A.7.6) family.

Its subcellular location is the cell inner membrane. The enzyme catalyses L-rhamnopyranose(in) + H(+)(in) = L-rhamnopyranose(out) + H(+)(out). Uptake of L-rhamnose across the cytoplasmic membrane with the concomitant transport of protons into the cell (symport system). The sequence is that of L-rhamnose-proton symporter from Klebsiella pneumoniae subsp. pneumoniae (strain ATCC 700721 / MGH 78578).